The sequence spans 607 residues: Elongation factor 4 (607 aa).

Positions 11–193 constitute a tr-type G domain; sequence ENIRNFSIIA…KIVEVVPPPE (183 aa). Residues 23–28 and 140–143 each bind GTP; these read DHGKST and NKID.

This sequence belongs to the TRAFAC class translation factor GTPase superfamily. Classic translation factor GTPase family. LepA subfamily.

It localises to the cell membrane. It carries out the reaction GTP + H2O = GDP + phosphate + H(+). Functionally, required for accurate and efficient protein synthesis under certain stress conditions. May act as a fidelity factor of the translation reaction, by catalyzing a one-codon backward translocation of tRNAs on improperly translocated ribosomes. Back-translocation proceeds from a post-translocation (POST) complex to a pre-translocation (PRE) complex, thus giving elongation factor G a second chance to translocate the tRNAs correctly. Binds to ribosomes in a GTP-dependent manner. The polypeptide is Elongation factor 4 (Staphylococcus haemolyticus (strain JCSC1435)).